Here is a 320-residue protein sequence, read N- to C-terminus: ATP synthase gamma chain (320 aa).

The protein belongs to the ATPase gamma chain family. As to quaternary structure, F-type ATPases have 2 components, CF(1) - the catalytic core - and CF(0) - the membrane proton channel. CF(1) has five subunits: alpha(3), beta(3), gamma(1), delta(1), epsilon(1). CF(0) has three main subunits: a, b and c.

Its subcellular location is the cell membrane. Functionally, produces ATP from ADP in the presence of a proton gradient across the membrane. The gamma chain is believed to be important in regulating ATPase activity and the flow of protons through the CF(0) complex. The sequence is that of ATP synthase gamma chain from Lactobacillus helveticus (strain DPC 4571).